An 85-amino-acid chain; its full sequence is uncharacterized protein (85 aa).

It to A.fulgidus AF_0255 and AF_1363.

This is an uncharacterized protein from Archaeoglobus fulgidus (strain ATCC 49558 / DSM 4304 / JCM 9628 / NBRC 100126 / VC-16).